Consider the following 181-residue polypeptide: Sporozoite-associated mosquito saliva protein 1 (181 aa).

The N-terminal stretch at methionine 1–alanine 24 is a signal peptide.

Salivary gland (at protein level). In terms of tissue distribution, (Microbial infection) Detected with Plasmodium berghei sporozoites isolated from the saliva of infected Anopheles gambiae mosquitoes (at protein level).

Its subcellular location is the secreted. Decreases host neutrophil chemotaxis induced by N-formylmethionine-leucyl-phenylalanine (fMLP). In terms of biological role, (Microbial infection) Interacts with the surface of Plasmodium berghei sporozoites. Enhances sporozoite gliding activity. Enhances host hepatocyte traversal by sporozoites. This chain is Sporozoite-associated mosquito saliva protein 1, found in Anopheles gambiae (African malaria mosquito).